A 352-amino-acid polypeptide reads, in one-letter code: Uricase (352 aa).

A disordered region spans residues 1–32 (MFATPLRQPAAANHQTPKNSAGMDEHGKPYQY). The segment covering 23 to 32 (MDEHGKPYQY) has biased composition (basic and acidic residues). Residues Lys41 and Thr86 each act as charge relay system in the active site. Urate contacts are provided by Thr86, Asp87, Phe214, Arg231, Val279, Gln280, and Asn306. Catalysis depends on His308, which acts as the Charge relay system. A Microbody targeting signal motif is present at residues 350-352 (SHL).

It belongs to the uricase family. In terms of tissue distribution, malpighian tubules.

The protein localises to the peroxisome. The enzyme catalyses urate + O2 + H2O = 5-hydroxyisourate + H2O2. The protein operates within purine metabolism; urate degradation; (S)-allantoin from urate: step 1/3. Repressed by 20-hydroxyecdysone. Catalyzes the oxidation of uric acid to 5-hydroxyisourate, which is further processed to form (S)-allantoin. This is Uricase (Uro) from Drosophila melanogaster (Fruit fly).